We begin with the raw amino-acid sequence, 408 residues long: Multidrug resistance protein MdtG (408 aa).

Helical transmembrane passes span 16 to 36 (LIVA…VMPF), 58 to 78 (IVFS…GGLA), 92 to 112 (LGMG…QFLI), 115 to 135 (ALLG…ATQV), 146 to 166 (TLST…GLLA), 173 to 193 (PVFF…LFCI), 224 to 244 (LFVT…ILTL), 256 to 276 (VAFI…LSAP), 290 to 310 (ILIT…YVQT), 319 to 339 (FLLG…LVYN), and 378 to 398 (AVFL…WNSL).

The protein belongs to the major facilitator superfamily. DHA1 family. MdtG (TC 2.A.1.2.20) subfamily.

It is found in the cell inner membrane. In terms of biological role, confers resistance to fosfomycin and deoxycholate. The polypeptide is Multidrug resistance protein MdtG (Escherichia coli O139:H28 (strain E24377A / ETEC)).